We begin with the raw amino-acid sequence, 434 residues long: UDP-glucose 6-dehydrogenase (434 aa).

NAD(+)-binding positions include 2–19, Val11, Asp30, Lys35, Thr121, and Glu152; that span reads NITF…GVMM. Substrate contacts are provided by residues 148 to 152, Lys204, Asn208, 249 to 253, and Gly257; these read EFLRE and FLNAG. Cys260 (nucleophile) is an active-site residue. Lys263 contacts NAD(+). Lys321 lines the substrate pocket. Arg328 is an NAD(+) binding site.

The protein belongs to the UDP-glucose/GDP-mannose dehydrogenase family.

It carries out the reaction UDP-alpha-D-glucose + 2 NAD(+) + H2O = UDP-alpha-D-glucuronate + 2 NADH + 3 H(+). The protein operates within nucleotide-sugar biosynthesis; UDP-alpha-D-glucuronate biosynthesis; UDP-alpha-D-glucuronate from UDP-alpha-D-glucose: step 1/1. The polypeptide is UDP-glucose 6-dehydrogenase (udg) (Rickettsia bellii (strain RML369-C)).